The sequence spans 375 residues: MTPILFVDRDGTLITEPADFQIDAYEKLRFVDGVIPAMLKLRDAGYQFVIVSNQDGLGSESYPQASFDGPNNLMLQIFASQGIVFREVLIDCSWPADNAPTRKPGVGLMVPYLQDRTIDWSRSAMVGDRITDIQFAQNLNIRGFQLRTEQFGGDWDWAGIAHELADAPRRAVVQRNTKETRIRVELDLDRVAEPHTATGLPFFDHMLEQIGKHGGFALDIRAEGDLHIDEHHTIEDTGLALGQALREALGDKRGIGRYGFDPDDSPWRVAGDTTQHGFTLPMDETIASAALDFSGRPYFVFDGDFKRERVGDMPTELVPHFFRSVCDASGLNLHLHVRGENDHHKVEGCFKALARALRQAIRREGTALPSTKGAL.

A histidinol-phosphatase region spans residues 1 to 168 (MTPILFVDRD…GIAHELADAP (168 aa)). Residue D8 is the Nucleophile of the active site. Mg(2+)-binding residues include D8, D10, and D128. Residue D10 is the Proton donor of the active site. Positions 169–375 (RRAVVQRNTK…TALPSTKGAL (207 aa)) are imidazoleglycerol-phosphate dehydratase.

In the N-terminal section; belongs to the histidinol-phosphatase family. The protein in the C-terminal section; belongs to the imidazoleglycerol-phosphate dehydratase family. It depends on Mg(2+) as a cofactor.

It is found in the cytoplasm. The catalysed reaction is D-erythro-1-(imidazol-4-yl)glycerol 3-phosphate = 3-(imidazol-4-yl)-2-oxopropyl phosphate + H2O. The enzyme catalyses L-histidinol phosphate + H2O = L-histidinol + phosphate. Its pathway is amino-acid biosynthesis; L-histidine biosynthesis; L-histidine from 5-phospho-alpha-D-ribose 1-diphosphate: step 6/9. The protein operates within amino-acid biosynthesis; L-histidine biosynthesis; L-histidine from 5-phospho-alpha-D-ribose 1-diphosphate: step 8/9. In Xanthomonas campestris pv. campestris (strain 8004), this protein is Histidine biosynthesis bifunctional protein HisB.